The sequence spans 133 residues: Small ribosomal subunit protein uS11 (133 aa).

It belongs to the universal ribosomal protein uS11 family. Part of the 30S ribosomal subunit.

Functionally, located on the platform of the 30S subunit. In Pyrobaculum aerophilum (strain ATCC 51768 / DSM 7523 / JCM 9630 / CIP 104966 / NBRC 100827 / IM2), this protein is Small ribosomal subunit protein uS11.